The primary structure comprises 132 residues: Agouti-related protein (132 aa).

The first 20 residues, 1 to 20 (MLTAAVLSCALLLALPATRG), serve as a signal peptide directing secretion. The propeptide occupies 21-82 (AQMGLAPMEG…VLDLQDREPR (62 aa)). Cystine bridges form between C87-C102, C94-C108, C101-C119, C105-C129, and C110-C117. The region spanning 87 to 129 (CVRLHESCLGQQVPCCDPCATCYCRFFNAFCYCRKLGTAMNPC) is the Agouti domain. An interaction with melanocortin receptors region spans residues 111-113 (RFF).

In terms of assembly, interacts with melanocortin receptors MC3R, MC4R and MC5R. In terms of tissue distribution, expressed primarily in the adrenal gland, subthalamic nucleus, and hypothalamus, with a lower level of expression occurring in testis, lung, and kidney.

It localises to the secreted. The protein resides in the golgi apparatus lumen. In terms of biological role, plays a role in weight homeostasis. Involved in the control of feeding behavior through the central melanocortin system. Acts as alpha melanocyte-stimulating hormone antagonist by inhibiting cAMP production mediated by stimulation of melanocortin receptors within the hypothalamus and adrenal gland. Has very low activity with MC5R. Is an inverse agonist for MC3R and MC4R being able to suppress their constitutive activity. It promotes MC3R and MC4R endocytosis in an arrestin-dependent manner. The polypeptide is Agouti-related protein (AGRP) (Homo sapiens (Human)).